The following is a 372-amino-acid chain: MKYDLIIIGSGSVGAAAGYYATRAGLKVLMTDAHMPPHQQGSHHGDTRLIRHAYGEGEKYVPLVLRAQTLWDELSTHNEEPIFVRSGVVNLGPADSAFLANVARSAQQWQLNVERLDATALMTRWPEIRVPDNYIGLFEADSGFLRSELAITTWLRLAREAGCAQLFNSPVSHIHHDDNGVTIETSEGSYHASKALISAGTWVKALVPELPVQPVRKVFAWFKADGRYSTKNRFPAFTGEMPNGDQYYGFPAENDELKIGKHNGGQRIQAQEERKPFAAVASDGAEAFPFLRNVLPGIGGCLHGAACTYDNSPDEDFIIDTLPGHENTLVITGLSGHGFKFAPVLGEIAADFALGKTPSFDLTPFRLSRFSQ.

4–34 (DLIIIGSGSVGAAAGYYATRAGLKVLMTDAH) contributes to the FAD binding site. Cys-307 is subject to S-8alpha-FAD cysteine.

The protein belongs to the MSOX/MTOX family. MTOX subfamily. Monomer. FAD serves as cofactor.

The enzyme catalyses N(alpha)-methyl-L-tryptophan + O2 + H2O = L-tryptophan + formaldehyde + H2O2. In terms of biological role, catalyzes the oxidative demethylation of N-methyl-L-tryptophan. In Salmonella heidelberg (strain SL476), this protein is N-methyl-L-tryptophan oxidase.